We begin with the raw amino-acid sequence, 400 residues long: E3 ubiquitin-protein ligase RNF149 (400 aa).

The first 32 residues, 1-32, serve as a signal peptide directing secretion; it reads MAWRRREASVGARGVLALALLALALCVPGARG. N-linked (GlcNAc...) asparagine glycosylation is found at Asn-52 and Asn-145. The region spanning 67–175 is the PA domain; it reads SSPKEGAHGL…PKGREILELV (109 aa). A helical membrane pass occupies residues 201 to 221; the sequence is VVFVAIAFITMMIISLAWLIF. The RING-type; atypical zinc finger occupies 269–310; that stretch reads CAVCIENFKVKDIIRILPCKHIFHRICIDPWLLDHRTCPMCK. The disordered stretch occupies residues 325 to 400; the sequence is DVQEMPAPES…SDSRHGGPIS (76 aa). Position 345 is a phosphoserine (Ser-345). Residues 356–368 are compositionally biased toward low complexity; the sequence is DSSPPSASPAESE. The segment covering 389 to 400 has biased composition (basic and acidic residues); that stretch reads GRSDSRHGGPIS.

The protein localises to the membrane. The catalysed reaction is S-ubiquitinyl-[E2 ubiquitin-conjugating enzyme]-L-cysteine + [acceptor protein]-L-lysine = [E2 ubiquitin-conjugating enzyme]-L-cysteine + N(6)-ubiquitinyl-[acceptor protein]-L-lysine.. Its pathway is protein modification; protein ubiquitination. E3 ubiquitin-protein ligase. Ubiquitinates BRAF, inducing its proteasomal degradation. In Homo sapiens (Human), this protein is E3 ubiquitin-protein ligase RNF149 (RNF149).